The chain runs to 421 residues: Trimethyllysine dioxygenase, mitochondrial (421 aa).

A mitochondrion-targeting transit peptide spans 1–15 (MWCHRLSHLQSRLQD). K236 carries the post-translational modification N6-acetyllysine. H242, D244, and H389 together coordinate Fe cation.

Belongs to the gamma-BBH/TMLD family. In terms of assembly, homodimer. It depends on Fe(2+) as a cofactor. The cofactor is L-ascorbate.

It localises to the mitochondrion matrix. It catalyses the reaction N(6),N(6),N(6)-trimethyl-L-lysine + 2-oxoglutarate + O2 = (3S)-3-hydroxy-N(6),N(6),N(6)-trimethyl-L-lysine + succinate + CO2. Its pathway is amine and polyamine biosynthesis; carnitine biosynthesis. In terms of biological role, converts trimethyllysine (TML) into hydroxytrimethyllysine (HTML). This Bos taurus (Bovine) protein is Trimethyllysine dioxygenase, mitochondrial (TMLHE).